The sequence spans 487 residues: 26S proteasome non-ATPase regulatory subunit 3 homolog B (487 aa).

The disordered stretch occupies residues 1–21 (MTQDVEMKDNQTPTQSVVSAP). Over residues 10 to 21 (NQTPTQSVVSAP) the composition is skewed to polar residues. The region spanning 239–420 (CRYLFYLGKI…GCMVSKETGD (182 aa)) is the PCI domain. The segment at 452–487 (PPNTHREKESEEKRREMKQQEEELAKYMAEEDDDDF) is disordered. A compositionally biased stretch (basic and acidic residues) spans 455 to 480 (THREKESEEKRREMKQQEEELAKYMA).

This sequence belongs to the proteasome subunit S3 family. As to quaternary structure, component of the 19S regulatory particle (RP/PA700) lid subcomplex of the 26S proteasome. The 26S proteasome is composed of a core protease (CP), known as the 20S proteasome, capped at one or both ends by the 19S regulatory particle (RP/PA700). The RP/PA700 complex is composed of at least 17 different subunits in two subcomplexes, the base and the lid, which form the portions proximal and distal to the 20S proteolytic core, respectively. Interacts with UCH1 and UCH2. In terms of tissue distribution, preferentially expressed in flowers.

In terms of biological role, acts as a regulatory subunit of the 26 proteasome which is involved in the ATP-dependent degradation of ubiquitinated proteins. This is 26S proteasome non-ATPase regulatory subunit 3 homolog B from Arabidopsis thaliana (Mouse-ear cress).